The sequence spans 101 residues: Co-chaperonin GroES (101 aa).

The protein belongs to the GroES chaperonin family. In terms of assembly, heptamer of 7 subunits arranged in a ring. Interacts with the chaperonin GroEL.

It localises to the cytoplasm. Its function is as follows. Together with the chaperonin GroEL, plays an essential role in assisting protein folding. The GroEL-GroES system forms a nano-cage that allows encapsulation of the non-native substrate proteins and provides a physical environment optimized to promote and accelerate protein folding. GroES binds to the apical surface of the GroEL ring, thereby capping the opening of the GroEL channel. The chain is Co-chaperonin GroES from Thermus thermophilus (strain ATCC BAA-163 / DSM 7039 / HB27).